A 40-amino-acid chain; its full sequence is CKGQSCSSCSTKEFCLSKGSRLMYDCCTGSCCGVKTAGVT.

Contains 4 disulfide bonds. As to expression, expressed by the venom duct.

Its subcellular location is the secreted. In terms of biological role, omega-conotoxins act at presynaptic membranes, they bind and block voltage-gated calcium channels (Cav). This toxin inhibits rat Cav2.2/CACNA1B calcium channels in a dose-dependent manner (EC(50)=2.8 uM), whose effect is partially reversed after washing. In vivo, when injected into mice, it shows both an analgesic effect in acute thermal pain at 30 and 45 minutes post-injection and an anti-nociceptive effect in a formalin chronic pain test. This chain is Omega-conotoxin RsXXVIA, found in Conus regularis (Regular cone).